The sequence spans 459 residues: Trigger factor (459 aa).

The region spanning 166–245 is the PPIase FKBP-type domain; it reads GDFANIDLTA…VNSVKAEELP (80 aa).

This sequence belongs to the FKBP-type PPIase family. Tig subfamily.

It is found in the cytoplasm. It catalyses the reaction [protein]-peptidylproline (omega=180) = [protein]-peptidylproline (omega=0). Functionally, involved in protein export. Acts as a chaperone by maintaining the newly synthesized protein in an open conformation. Functions as a peptidyl-prolyl cis-trans isomerase. The sequence is that of Trigger factor from Bifidobacterium longum (strain DJO10A).